A 452-amino-acid chain; its full sequence is tRNA-2-methylthio-N(6)-dimethylallyladenosine synthase (452 aa).

The region spanning 3–118 is the MTTase N-terminal domain; sequence KKVFIKTYGC…LPQLLAERER (116 aa). Positions 12, 49, 81, 155, 159, and 162 each coordinate [4Fe-4S] cluster. A Radical SAM core domain is found at 141-379; sequence RVEGASAFVS…QTVINDSIKR (239 aa). In terms of domain architecture, TRAM spans 382 to 445; the sequence is ESRLGTVQRI…SFTLRGEVVT (64 aa).

The protein belongs to the methylthiotransferase family. MiaB subfamily. In terms of assembly, monomer. [4Fe-4S] cluster is required as a cofactor.

It is found in the cytoplasm. The enzyme catalyses N(6)-dimethylallyladenosine(37) in tRNA + (sulfur carrier)-SH + AH2 + 2 S-adenosyl-L-methionine = 2-methylsulfanyl-N(6)-dimethylallyladenosine(37) in tRNA + (sulfur carrier)-H + 5'-deoxyadenosine + L-methionine + A + S-adenosyl-L-homocysteine + 2 H(+). In terms of biological role, catalyzes the methylthiolation of N6-(dimethylallyl)adenosine (i(6)A), leading to the formation of 2-methylthio-N6-(dimethylallyl)adenosine (ms(2)i(6)A) at position 37 in tRNAs that read codons beginning with uridine. This Albidiferax ferrireducens (strain ATCC BAA-621 / DSM 15236 / T118) (Rhodoferax ferrireducens) protein is tRNA-2-methylthio-N(6)-dimethylallyladenosine synthase.